The following is a 958-amino-acid chain: Glycine dehydrogenase (decarboxylating) (958 aa).

The residue at position 703 (K703) is an N6-(pyridoxal phosphate)lysine.

It belongs to the GcvP family. The glycine cleavage system is composed of four proteins: P, T, L and H. Requires pyridoxal 5'-phosphate as cofactor.

The catalysed reaction is N(6)-[(R)-lipoyl]-L-lysyl-[glycine-cleavage complex H protein] + glycine + H(+) = N(6)-[(R)-S(8)-aminomethyldihydrolipoyl]-L-lysyl-[glycine-cleavage complex H protein] + CO2. Its function is as follows. The glycine cleavage system catalyzes the degradation of glycine. The P protein binds the alpha-amino group of glycine through its pyridoxal phosphate cofactor; CO(2) is released and the remaining methylamine moiety is then transferred to the lipoamide cofactor of the H protein. The chain is Glycine dehydrogenase (decarboxylating) from Nitrobacter hamburgensis (strain DSM 10229 / NCIMB 13809 / X14).